A 493-amino-acid chain; its full sequence is Cytochrome P450 2E1 (493 aa).

298–303 (FAGTET) is a substrate binding site. Cys-437 is a heme binding site.

This sequence belongs to the cytochrome P450 family. In terms of assembly, interacts with chaperones HSP70 and HSP90; this interaction is required for initial targeting to mitochondria. Heme is required as a cofactor.

It localises to the endoplasmic reticulum membrane. It is found in the microsome membrane. The protein resides in the mitochondrion inner membrane. The catalysed reaction is an organic molecule + reduced [NADPH--hemoprotein reductase] + O2 = an alcohol + oxidized [NADPH--hemoprotein reductase] + H2O + H(+). It catalyses the reaction (5Z,8Z,11Z)-eicosatrienoate + reduced [NADPH--hemoprotein reductase] + O2 = 19-hydroxy-(5Z,8Z,11Z)-eicosatrienoate + oxidized [NADPH--hemoprotein reductase] + H2O + H(+). The enzyme catalyses (5Z,8Z,11Z,14Z,17Z)-eicosapentaenoate + reduced [NADPH--hemoprotein reductase] + O2 = 19-hydroxy-(5Z,8Z,11Z,14Z,17Z)-eicosapentaenoate + oxidized [NADPH--hemoprotein reductase] + H2O + H(+). It carries out the reaction (4Z,7Z,10Z,13Z,16Z,19Z)-docosahexaenoate + reduced [NADPH--hemoprotein reductase] + O2 = 21-hydroxy-(4Z,7Z,10Z,13Z,16Z,19Z)-docosahexaenoate + oxidized [NADPH--hemoprotein reductase] + H2O + H(+). The catalysed reaction is dodecanoate + reduced [NADPH--hemoprotein reductase] + O2 = 11-hydroxydodecanoate + oxidized [NADPH--hemoprotein reductase] + H2O + H(+). It catalyses the reaction tetradecanoate + reduced [NADPH--hemoprotein reductase] + O2 = 13-hydroxytetradecanoate + oxidized [NADPH--hemoprotein reductase] + H2O + H(+). The enzyme catalyses 4-nitrophenol + NADPH + O2 + H(+) = 4-nitrocatechol + NADP(+) + H2O. It participates in lipid metabolism; fatty acid metabolism. Its activity is regulated as follows. The omega-1 hydroxylase activity is stimulated by cytochrome b5. A cytochrome P450 monooxygenase involved in the metabolism of fatty acids. Mechanistically, uses molecular oxygen inserting one oxygen atom into a substrate, and reducing the second into a water molecule, with two electrons provided by NADPH via cytochrome P450 reductase (NADPH--hemoprotein reductase). Catalyzes the hydroxylation of carbon-hydrogen bonds. Hydroxylates fatty acids specifically at the omega-1 position displaying the highest catalytic activity for saturated fatty acids. May be involved in the oxidative metabolism of xenobiotics. The chain is Cytochrome P450 2E1 (CYP2E1) from Macaca mulatta (Rhesus macaque).